The primary structure comprises 655 residues: Tumor necrosis factor receptor superfamily member 21 (655 aa).

A signal peptide spans 1-41 (MGTSASSITALASCSRIAGQVGATMVAGSLLLLGFLSTITA). At 42 to 349 (QPEQKTLSLT…PHKHFDINEH (308 aa)) the chain is on the extracellular side. 4 TNFR-Cys repeats span residues 50-88 (LTGT…LRVC), 90-131 (SCPS…DREC), 133-167 (CPPG…EDVR), and 170-211 (QCAR…DNVC). Cystine bridges form between cysteine 67-cysteine 80, cysteine 70-cysteine 88, cysteine 91-cysteine 106, cysteine 109-cysteine 123, cysteine 113-cysteine 131, cysteine 133-cysteine 144, cysteine 150-cysteine 168, cysteine 171-cysteine 186, and cysteine 192-cysteine 211. Asparagine 82 is a glycosylation site (N-linked (GlcNAc...) asparagine). Disordered regions lie at residues 214-306 (HLSS…GPHH) and 318-338 (EATG…HPRQ). Low complexity predominate over residues 216-225 (SSSSTTPSSP). 2 stretches are compositionally biased toward polar residues: residues 241–262 (VPSS…TASV) and 276–302 (PDNT…THQQ). 3 N-linked (GlcNAc...) asparagine glycosylation sites follow: asparagine 252, asparagine 278, and asparagine 289. Residues 350-370 (LPWMIVLFLLLVLVLIVVCSI) form a helical membrane-spanning segment. The S-palmitoyl cysteine moiety is linked to residue cysteine 368. The Cytoplasmic segment spans residues 371 to 655 (RKSSRTLKKG…SVYSHLPDLL (285 aa)). Residues 415–498 (GIDILKLVAA…DVVEKIRGLM (84 aa)) enclose the Death domain.

Associates with TRADD. Interacts with NGFR. Interacts with CASP8. Oxidized in response to reactive oxygen species (ROS), leading to endocytosis. As to expression, detected in brain (at protein level). Detected in corpus callosum oligodendrocytes. Detected in embryonic and adult brain.

It localises to the cell membrane. Its function is as follows. Promotes apoptosis, possibly via a pathway that involves the activation of NF-kappa-B. Can also promote apoptosis mediated by BAX and by the release of cytochrome c from the mitochondria into the cytoplasm. Trophic-factor deprivation triggers the cleavage of surface APP by beta-secretase to release sAPP-beta which is further cleaved to release an N-terminal fragment of APP (N-APP). Negatively regulates oligodendrocyte survival, maturation and myelination. Plays a role in signaling cascades triggered by stimulation of T-cell receptors, in the adaptive immune response and in the regulation of T-cell differentiation and proliferation. Negatively regulates T-cell responses and the release of cytokines such as IL4, IL5, IL10, IL13 and IFNG by Th2 cells. Negatively regulates the production of IgG, IgM and IgM in response to antigens. May inhibit the activation of JNK in response to T-cell stimulation. Also acts as a regulator of pyroptosis: recruits CASP8 in response to reactive oxygen species (ROS) and subsequent oxidation, leading to activation of GSDMC. This is Tumor necrosis factor receptor superfamily member 21 (Tnfrsf21) from Rattus norvegicus (Rat).